Reading from the N-terminus, the 272-residue chain is MTALRALWSEMQDTCTSLGLMLSVVLLAGLARVVARQQQLHRPMAHAFVLEFLATLQLCCCTHELLLLSEQEPAHPTWPLTLIYFFTLVHGLTLVGTSSNPCGVMMQMMLGGMSPEMGAVRLLAQLIGALGSRYCIGALWSLGLTKYHVSERSFACKNPIQVDLPKAVIVEALCSFIFHSALLNFQEVRPKLRIHLLAALITFLVYAGGSLTGAVFNPALALSLHFKCFDEAFLQFFIVYWLAPSLGILLMILMFSFFLPWLYNNHTINKKE.

At 1-14 (MTALRALWSEMQDT) the chain is on the cytoplasmic side. Residues 15 to 35 (CTSLGLMLSVVLLAGLARVVA) form a helical membrane-spanning segment. At 36–47 (RQQQLHRPMAHA) the chain is on the lumenal side. A helical transmembrane segment spans residues 48-68 (FVLEFLATLQLCCCTHELLLL). The Cytoplasmic portion of the chain corresponds to 69 to 75 (SEQEPAH). A helical membrane pass occupies residues 76–96 (PTWPLTLIYFFTLVHGLTLVG). The Lumenal portion of the chain corresponds to 97 to 167 (TSSNPCGVMM…NPIQVDLPKA (71 aa)). The NPC motif lies at 100 to 102 (NPC). The chain crosses the membrane as a helical span at residues 168–188 (VIVEALCSFIFHSALLNFQEV). Over 189–195 (RPKLRIH) the chain is Cytoplasmic. A helical membrane pass occupies residues 196–216 (LLAALITFLVYAGGSLTGAVF). An NPA motif is present at residues 217–219 (NPA). Residues 217–235 (NPALALSLHFKCFDEAFLQ) are Lumenal-facing. Residues 236-256 (FFIVYWLAPSLGILLMILMFS) traverse the membrane as a helical segment. Residues 257–272 (FFLPWLYNNHTINKKE) lie on the Cytoplasmic side of the membrane.

It belongs to the MIP/aquaporin (TC 1.A.8) family. AQP11/AQP12 subfamily. In terms of assembly, homodimer; disulfide-linked. Homotetramer. Can also form homomultimer. Post-translationally, not glycosylated. As to expression, expressed in retina specifically at retinal Mueller glial cells.

The protein resides in the endoplasmic reticulum membrane. It localises to the cytoplasmic vesicle membrane. The protein localises to the cell membrane. The catalysed reaction is H2O(in) = H2O(out). It catalyses the reaction glycerol(in) = glycerol(out). The enzyme catalyses H2O2(out) = H2O2(in). Channel protein that facilitates the transport of water, glycerol and hydrogen peroxide across membrane of cell or organelles guaranteeing intracellular homeostasis in several organes like liver, kidney and brain. In situation of stress, participates in endoplasmic reticulum (ER) homeostasis by regulating redox homeostasis through the transport of hydrogen peroxide across the endoplasmic reticulum membrane thereby regulating the oxidative stress through the NADPH oxidase 2 pathway. Plays a role by maintaining an environment suitable for translation or protein foldings in the ER lumen namely by participating in the PKD1 glycosylation processing resulting in regulation of PKD1 membrane trafficking thereby preventing the accumulation of unfolding protein in ER. Plays a role in the proximal tubule function by regulating its endosomal acidification. May play a role in postnatal kidney development. The chain is Aquaporin-11 from Equus caballus (Horse).